A 295-amino-acid chain; its full sequence is GTPase Era (295 aa).

In terms of domain architecture, Era-type G spans tyrosine 5 to glutamate 172. A G1 region spans residues glycine 13–serine 20. Position 13–20 (glycine 13–serine 20) interacts with GTP. The interval glutamine 39 to tyrosine 43 is G2. The interval aspartate 60–glycine 63 is G3. Residues aspartate 60–leucine 64 and asparagine 121–aspartate 124 contribute to the GTP site. The tract at residues asparagine 121–aspartate 124 is G4. A G5 region spans residues leucine 151–alanine 153. The 77-residue stretch at leucine 203–serine 279 folds into the KH type-2 domain.

The protein belongs to the TRAFAC class TrmE-Era-EngA-EngB-Septin-like GTPase superfamily. Era GTPase family. Monomer.

The protein localises to the cytoplasm. Its subcellular location is the cell inner membrane. In terms of biological role, an essential GTPase that binds both GDP and GTP, with rapid nucleotide exchange. Plays a role in 16S rRNA processing and 30S ribosomal subunit biogenesis and possibly also in cell cycle regulation and energy metabolism. This chain is GTPase Era, found in Coxiella burnetii (strain RSA 331 / Henzerling II).